A 574-amino-acid chain; its full sequence is Proline--tRNA ligase (574 aa).

Belongs to the class-II aminoacyl-tRNA synthetase family. ProS type 1 subfamily. Homodimer.

Its subcellular location is the cytoplasm. The enzyme catalyses tRNA(Pro) + L-proline + ATP = L-prolyl-tRNA(Pro) + AMP + diphosphate. In terms of biological role, catalyzes the attachment of proline to tRNA(Pro) in a two-step reaction: proline is first activated by ATP to form Pro-AMP and then transferred to the acceptor end of tRNA(Pro). As ProRS can inadvertently accommodate and process non-cognate amino acids such as alanine and cysteine, to avoid such errors it has two additional distinct editing activities against alanine. One activity is designated as 'pretransfer' editing and involves the tRNA(Pro)-independent hydrolysis of activated Ala-AMP. The other activity is designated 'posttransfer' editing and involves deacylation of mischarged Ala-tRNA(Pro). The misacylated Cys-tRNA(Pro) is not edited by ProRS. The sequence is that of Proline--tRNA ligase from Nitratidesulfovibrio vulgaris (strain DP4) (Desulfovibrio vulgaris).